A 124-amino-acid chain; its full sequence is Fluoride-specific ion channel FluC (124 aa).

4 consecutive transmembrane segments (helical) span residues 5–25 (ILAV…AGTW), 38–58 (TLAV…WFLL), 69–89 (GLIV…LDTL), and 97–117 (ALIA…ATWA). The Na(+) site is built by Gly-76 and Thr-79.

This sequence belongs to the fluoride channel Fluc/FEX (TC 1.A.43) family.

Its subcellular location is the cell inner membrane. The enzyme catalyses fluoride(in) = fluoride(out). With respect to regulation, na(+) is not transported, but it plays an essential structural role and its presence is essential for fluoride channel function. Its function is as follows. Fluoride-specific ion channel. Important for reducing fluoride concentration in the cell, thus reducing its toxicity. The polypeptide is Fluoride-specific ion channel FluC (Pseudomonas fluorescens (strain SBW25)).